The following is a 338-amino-acid chain: Glycerol-3-phosphate dehydrogenase [NAD(P)+] (338 aa).

NADPH-binding residues include Ser-13, Trp-14, and Lys-108. The sn-glycerol 3-phosphate site is built by Lys-108, Gly-139, and Ser-141. Ala-143 contributes to the NADPH binding site. Sn-glycerol 3-phosphate-binding residues include Lys-194, Asp-247, Ser-257, Arg-258, and Asn-259. Residue Lys-194 is the Proton acceptor of the active site. Arg-258 serves as a coordination point for NADPH. Residues Val-282 and Glu-284 each coordinate NADPH.

The protein belongs to the NAD-dependent glycerol-3-phosphate dehydrogenase family.

Its subcellular location is the cytoplasm. It carries out the reaction sn-glycerol 3-phosphate + NAD(+) = dihydroxyacetone phosphate + NADH + H(+). The enzyme catalyses sn-glycerol 3-phosphate + NADP(+) = dihydroxyacetone phosphate + NADPH + H(+). Its pathway is membrane lipid metabolism; glycerophospholipid metabolism. In terms of biological role, catalyzes the reduction of the glycolytic intermediate dihydroxyacetone phosphate (DHAP) to sn-glycerol 3-phosphate (G3P), the key precursor for phospholipid synthesis. The sequence is that of Glycerol-3-phosphate dehydrogenase [NAD(P)+] from Streptococcus pneumoniae (strain JJA).